A 251-amino-acid chain; its full sequence is 5'-nucleotidase SurE (251 aa).

The a divalent metal cation site is built by Asp-8, Asp-9, Ser-39, and Asn-95.

It belongs to the SurE nucleotidase family. A divalent metal cation serves as cofactor.

The protein localises to the cytoplasm. It catalyses the reaction a ribonucleoside 5'-phosphate + H2O = a ribonucleoside + phosphate. Functionally, nucleotidase that shows phosphatase activity on nucleoside 5'-monophosphates. The chain is 5'-nucleotidase SurE from Clostridium botulinum (strain Alaska E43 / Type E3).